The chain runs to 258 residues: Thiazole synthase (258 aa).

Catalysis depends on Lys97, which acts as the Schiff-base intermediate with DXP. Residues Gly158, Ala184–Gly185, and Asn206–Thr207 each bind 1-deoxy-D-xylulose 5-phosphate.

Belongs to the ThiG family. Homotetramer. Forms heterodimers with either ThiH or ThiS.

It localises to the cytoplasm. It catalyses the reaction [ThiS sulfur-carrier protein]-C-terminal-Gly-aminoethanethioate + 2-iminoacetate + 1-deoxy-D-xylulose 5-phosphate = [ThiS sulfur-carrier protein]-C-terminal Gly-Gly + 2-[(2R,5Z)-2-carboxy-4-methylthiazol-5(2H)-ylidene]ethyl phosphate + 2 H2O + H(+). Its pathway is cofactor biosynthesis; thiamine diphosphate biosynthesis. Functionally, catalyzes the rearrangement of 1-deoxy-D-xylulose 5-phosphate (DXP) to produce the thiazole phosphate moiety of thiamine. Sulfur is provided by the thiocarboxylate moiety of the carrier protein ThiS. In vitro, sulfur can be provided by H(2)S. The protein is Thiazole synthase of Marinomonas sp. (strain MWYL1).